A 233-amino-acid polypeptide reads, in one-letter code: Ribonuclease 3 (233 aa).

An RNase III domain is found at 7-136 (KQYLLSEFNI…FIGALYLDQG (130 aa)). Glutamate 49 contacts Mg(2+). Aspartate 53 is a catalytic residue. Mg(2+) contacts are provided by aspartate 122 and glutamate 125. Residue glutamate 125 is part of the active site. Residues 162–232 (DFKSRLQEKL…ARAALKLLEE (71 aa)) enclose the DRBM domain.

The protein belongs to the ribonuclease III family. Homodimer. It depends on Mg(2+) as a cofactor.

The protein resides in the cytoplasm. The enzyme catalyses Endonucleolytic cleavage to 5'-phosphomonoester.. In terms of biological role, digests double-stranded RNA. Involved in the processing of primary rRNA transcript to yield the immediate precursors to the large and small rRNAs (23S and 16S). Processes some mRNAs, and tRNAs when they are encoded in the rRNA operon. Processes pre-crRNA and tracrRNA of type II CRISPR loci if present in the organism. This Leuconostoc citreum (strain KM20) protein is Ribonuclease 3.